Here is a 575-residue protein sequence, read N- to C-terminus: Transcription factor COE2 (575 aa).

The tract at residues Arg62–Asn65 is interaction with DNA. A C5-type zinc finger spans residues Cys150–Cys169. Interaction with DNA regions lie at residues Asn196 to Asn203 and Asn235 to Lys238. Residues Pro253–Thr336 form the IPT/TIG domain. Over residues Ser441–Thr453 the composition is skewed to polar residues. Residues Ser441–Met479 form a disordered region. The span at Ser454 to Met479 shows a compositional bias: low complexity.

Belongs to the COE family. Forms either a homodimer or a heterodimer with a related family member. Interacts with SIX1.

It is found in the nucleus. Its function is as follows. Transcription factor that, in osteoblasts, activates the decoy receptor for RANKL, TNFRSF11B, which in turn regulates osteoclast differentiation. Acts in synergy with the Wnt-responsive LEF1/CTNNB1 pathway. Recognizes variations of the palindromic sequence 5'-ATTCCCNNGGGAATT-3'. The polypeptide is Transcription factor COE2 (EBF2) (Homo sapiens (Human)).